Consider the following 374-residue polypeptide: Chaperone protein DnaJ (374 aa).

The J domain maps to 4 to 69 (SYYEILEITQ…EKRAIYDRYG (66 aa)). The CR-type zinc finger occupies 136-213 (GCKKNIDFTY…CKGLGYNESK (78 aa)). Positions 149, 152, 165, 168, 187, 190, 201, and 204 each coordinate Zn(2+). CXXCXGXG motif repeat units follow at residues 149 to 156 (CKTCNGTG), 165 to 172 (CPKCQGRG), 187 to 194 (CPDCQGSG), and 201 to 208 (CNDCKGLG).

Belongs to the DnaJ family. Homodimer. It depends on Zn(2+) as a cofactor.

It is found in the cytoplasm. Participates actively in the response to hyperosmotic and heat shock by preventing the aggregation of stress-denatured proteins and by disaggregating proteins, also in an autonomous, DnaK-independent fashion. Unfolded proteins bind initially to DnaJ; upon interaction with the DnaJ-bound protein, DnaK hydrolyzes its bound ATP, resulting in the formation of a stable complex. GrpE releases ADP from DnaK; ATP binding to DnaK triggers the release of the substrate protein, thus completing the reaction cycle. Several rounds of ATP-dependent interactions between DnaJ, DnaK and GrpE are required for fully efficient folding. Also involved, together with DnaK and GrpE, in the DNA replication of plasmids through activation of initiation proteins. In Campylobacter jejuni subsp. doylei (strain ATCC BAA-1458 / RM4099 / 269.97), this protein is Chaperone protein DnaJ.